We begin with the raw amino-acid sequence, 434 residues long: Putative neutral sphingomyelinase (434 aa).

A Mg(2+)-binding site is contributed by Glu-83. His-318 acts as the Proton acceptor in catalysis. 2 helical membrane passes run 366–388 (IFFF…FEVF) and 392–414 (FAVL…LIGL).

This sequence belongs to the neutral sphingomyelinase family.

The protein resides in the membrane. The enzyme catalyses an N-(acyl)-sphingosylphosphocholine + H2O = an N-acyl-sphingoid base + phosphocholine + H(+). It carries out the reaction a sphingomyelin + H2O = phosphocholine + an N-acylsphing-4-enine + H(+). The catalysed reaction is an N-acyl-15-methylhexadecasphing-4-enine-1-phosphocholine + H2O = an N-acyl-15-methylhexadecasphing-4-enine + phosphocholine + H(+). The protein operates within lipid metabolism; sphingolipid metabolism. Catalyzes the hydrolysis of sphingomyelin producing a ceramide (N-acyl-sphingoid base) and a phosphocholine. C.elegans contain specific sphingoid bases, which are unique or different in structure compared to the sphingoid bases found in other animals. Two examples of these distinctive compounds are: 15-methylhexadecasphinganine and 15-methylhexadecasphing-4-enine. This is Putative neutral sphingomyelinase from Caenorhabditis elegans.